Reading from the N-terminus, the 110-residue chain is V-type proton ATPase subunit F (110 aa).

Belongs to the V-ATPase F subunit family. V-ATPase is a heteromultimeric enzyme made up of two complexes: the ATP-hydrolytic V1 complex and the proton translocation V0 complex. The V1 complex consists of three catalytic AB heterodimers that form a heterohexamer, three peripheral stalks each consisting of EG heterodimers, one central rotor including subunits D and F, and the regulatory subunits C and H. The proton translocation complex V0 consists of the proton transport subunit a, a ring of proteolipid subunits c9c'', rotary subunit d, subunits e and f, and two accessory subunits.

Its function is as follows. Subunit of the V1 complex of vacuolar(H+)-ATPase (V-ATPase), a multisubunit enzyme composed of a peripheral complex (V1) that hydrolyzes ATP and a membrane integral complex (V0) that translocates protons. V-ATPase is responsible for acidifying and maintaining the pH of intracellular compartments and in some cell types, is targeted to the plasma membrane, where it is responsible for acidifying the extracellular environment. The polypeptide is V-type proton ATPase subunit F (atp6s14) (Xenopus laevis (African clawed frog)).